Reading from the N-terminus, the 596-residue chain is MRVKKKNTTGNARNFVTRSQAVRKLQISLADFRRLCIFKGIYPREPRNKKKANKGSTAPTTFYYYKDIQYLQHEPVLAKFREHKTFAKKLTRALGRGEVSSAKKLEENKSHYKLDHIIKERYPSFADALRDLDDALNMLFLFANLPATDQVSTRVTKDAQELCNQWLALIARERLVRKVFVSIKGVYYQANVRGEEVRWLVPYKFPENIPSDVDFRIMLTFLEFYSTLLHFVLYKLYTDNGLVYPPKLDIKKNKLIGGISAYILESKDAPFLSSVDGSADSENQEVQVLDKKALRHAMKADDKAGSEADEGDADSNEQVTNIELDDFEDKNKNHGDILEQPSQYDSPTSTLFSEFVFYIGREVPVDILEFLIVSCGGSVISEAALDQADAANVDVSKVTHQLVDRPVVKNKVAGRTYIQPQWVFDSINKGELVPANLYLPGESLPPHLSPWGDSVGYDPAAELAEEEAESEEEEEVSDEAEGDEEATLAAEEDEEDEAEAEELRAQKELELEAQGVTYSEAADSAAPSKKASKQKKRKTEEEEEKDLKLIMMSNKQRKLFKKMKYSNQQKEQEIETLKQKKKQIAKTKAKLKKLEN.

A BRCT domain is found at 347-440 (PTSTLFSEFV…ELVPANLYLP (94 aa)). The tract at residues 449–552 (SPWGDSVGYD…EEKDLKLIMM (104 aa)) is disordered. The stretch at 460 to 596 (AAELAEEEAE…TKAKLKKLEN (137 aa)) forms a coiled coil. The span at 463 to 500 (LAEEEAESEEEEEVSDEAEGDEEATLAAEEDEEDEAEA) shows a compositional bias: acidic residues. A compositionally biased stretch (basic and acidic residues) spans 501-510 (EELRAQKELE). Residues 519-529 (SEAADSAAPSK) are compositionally biased toward low complexity.

This sequence belongs to the pescadillo family. In terms of assembly, component of the NOP7 complex, composed of ERB1, NOP7 and YTM1. The complex is held together by ERB1, which interacts with NOP7 via its N-terminal domain and with YTM1 via a high-affinity interaction between the seven-bladed beta-propeller domains of the 2 proteins. The NOP7 complex associates with the 66S pre-ribosome.

The protein localises to the nucleus. It localises to the nucleolus. Its subcellular location is the nucleoplasm. In terms of biological role, component of the NOP7 complex, which is required for maturation of the 25S and 5.8S ribosomal RNAs and formation of the 60S ribosome. This chain is Pescadillo homolog, found in Eremothecium gossypii (strain ATCC 10895 / CBS 109.51 / FGSC 9923 / NRRL Y-1056) (Yeast).